The following is a 211-amino-acid chain: Imidazole glycerol phosphate synthase subunit HisH (211 aa).

Positions 4 to 211 (TVALLDYGSG…QLLRNWINHI (208 aa)) constitute a Glutamine amidotransferase type-1 domain. The Nucleophile role is filled by C82. Residues H192 and E194 contribute to the active site.

In terms of assembly, heterodimer of HisH and HisF.

The protein resides in the cytoplasm. It catalyses the reaction 5-[(5-phospho-1-deoxy-D-ribulos-1-ylimino)methylamino]-1-(5-phospho-beta-D-ribosyl)imidazole-4-carboxamide + L-glutamine = D-erythro-1-(imidazol-4-yl)glycerol 3-phosphate + 5-amino-1-(5-phospho-beta-D-ribosyl)imidazole-4-carboxamide + L-glutamate + H(+). The catalysed reaction is L-glutamine + H2O = L-glutamate + NH4(+). It participates in amino-acid biosynthesis; L-histidine biosynthesis; L-histidine from 5-phospho-alpha-D-ribose 1-diphosphate: step 5/9. In terms of biological role, IGPS catalyzes the conversion of PRFAR and glutamine to IGP, AICAR and glutamate. The HisH subunit catalyzes the hydrolysis of glutamine to glutamate and ammonia as part of the synthesis of IGP and AICAR. The resulting ammonia molecule is channeled to the active site of HisF. This chain is Imidazole glycerol phosphate synthase subunit HisH, found in Corynebacterium efficiens (strain DSM 44549 / YS-314 / AJ 12310 / JCM 11189 / NBRC 100395).